The primary structure comprises 492 residues: Ketol-acid reductoisomerase (NADP(+)) (492 aa).

In terms of domain architecture, KARI N-terminal Rossmann spans 15–208 (AQLGKCRFMA…GGHRAGVLES (194 aa)). NADP(+) contacts are provided by residues 45–48 (CGAQ), Arg68, Arg76, Ser78, and 108–110 (DKQ). Residue His132 is part of the active site. Residue Gly158 participates in NADP(+) binding. 2 KARI C-terminal knotted domains span residues 209–344 (SFVA…TAAQ) and 345–485 (FEGK…MTDM). Mg(2+) contacts are provided by Asp217, Glu221, Glu389, and Glu393. Ser414 is a substrate binding site.

It belongs to the ketol-acid reductoisomerase family. It depends on Mg(2+) as a cofactor.

It carries out the reaction (2R)-2,3-dihydroxy-3-methylbutanoate + NADP(+) = (2S)-2-acetolactate + NADPH + H(+). The catalysed reaction is (2R,3R)-2,3-dihydroxy-3-methylpentanoate + NADP(+) = (S)-2-ethyl-2-hydroxy-3-oxobutanoate + NADPH + H(+). It functions in the pathway amino-acid biosynthesis; L-isoleucine biosynthesis; L-isoleucine from 2-oxobutanoate: step 2/4. It participates in amino-acid biosynthesis; L-valine biosynthesis; L-valine from pyruvate: step 2/4. Its function is as follows. Involved in the biosynthesis of branched-chain amino acids (BCAA). Catalyzes an alkyl-migration followed by a ketol-acid reduction of (S)-2-acetolactate (S2AL) to yield (R)-2,3-dihydroxy-isovalerate. In the isomerase reaction, S2AL is rearranged via a Mg-dependent methyl migration to produce 3-hydroxy-3-methyl-2-ketobutyrate (HMKB). In the reductase reaction, this 2-ketoacid undergoes a metal-dependent reduction by NADPH to yield (R)-2,3-dihydroxy-isovalerate. The sequence is that of Ketol-acid reductoisomerase (NADP(+)) from Erwinia tasmaniensis (strain DSM 17950 / CFBP 7177 / CIP 109463 / NCPPB 4357 / Et1/99).